A 748-amino-acid polypeptide reads, in one-letter code: MAKPAGDAAVGSRSGELFLPSVSSSATSPAPSAAPAPASVSLLSLNGEAPLIRGLSLVSQAPGEALAWAPRTSCPGENTSSGGKVSPYSLEISEKLFCSACDQIFQNHQEQREHYKLDWHRFNLKQRLKNKPLLSASDFEQQSSTGDLSSISGSDDTDSSSEEDLLPLDEGRAESEKPNRPPGFYPHRVLFKNAQGQFLYAYRCVLGPHQIPPEKAELLLQNLQNGGPRYYVVLMAAAGHFAGAIFQGREVVAHKTFHRYTVRAKRGTAQGLQDAHGRASRSAGANLRRYNEAMLYKDVRNLLAGPIWSKALGEAETVLFRAPRSGRSLFFGGQGAPLQRDDPRLWDIPLTTRRPTFGELQRVLHKLTTLQVYDEDPREMVRFHSPETHWKPVREERKKDTEKEKTKVPSDANKPLGQDEEPLKQGSESQEEDGSEVELELVELTLGTLDLREFEVLPKRRRRRKKKERSQEQQCGAHGPLPQQPQDEPFSQPTQEVETPLDTLVYEAKAPGQPELWDTLLAACRAGEVEVLKLQLATGLVDPGVKSLLNAPLGSGGFTLLHAAAAAGRGLVVRLLLEAGADPTVQDSRARPPYTVAADKSTRNEFRRFMEKNLDAYDYNKARVPGPLTQEMEARQATRKKEQKAARRQREQQQRKQREQEEQEQEEQRRFAALSDREKRALAAERRLAAQLGAPSPPVPDSAVASAGRCWSCGVSLQGLIPFHYLDFSFCSTRCLRDHRSQAGRPSS.

The C2H2-type zinc-finger motif lies at Leu-96–His-120. The interval Ser-135–Tyr-185 is disordered. A compositionally biased stretch (low complexity) spans Ser-143 to Ser-154. Acidic residues predominate over residues Asp-155–Pro-167. A compositionally biased stretch (basic and acidic residues) spans Asp-169–Asn-179. The VLRF1 domain occupies Gly-227–Leu-370. Residue Gln-270 is part of the active site. Residues Ser-282 and Ser-385 each carry the phosphoserine modification. Residues Phe-383–Val-408 show a composition bias toward basic and acidic residues. Disordered stretches follow at residues Phe-383–Glu-438 and Arg-460–Val-497. A compositionally biased stretch (acidic residues) spans Ser-429–Glu-438. Over residues Gln-484–Val-497 the composition is skewed to polar residues. Residues Glu-515–Val-545 form an ANK 1 repeat. Position 555 is a phosphoserine (Ser-555). Residues Gly-556–Val-585 form an ANK 2 repeat. The segment at Lys-621–Arg-677 is disordered. Positions Leu-628 to Ala-681 form a coiled coil. Thr-629 carries the post-translational modification Phosphothreonine. The span at Met-632–Arg-677 shows a compositional bias: basic and acidic residues. Residues Gln-654 to Glu-666 form a VCP/p97-interacting motif (VIM) region. Phosphoserine is present on Ser-702.

Belongs to the ANKZF1/VMS1 family. Interacts (via VIM motif) with VCP.

It is found in the cytoplasm. Endonuclease that cleaves polypeptidyl-tRNAs downstream of the ribosome-associated quality control (RQC) pathway to release incompletely synthesized polypeptides for degradation. The RQC pathway disassembles aberrantly stalled translation complexes to recycle or degrade the constituent parts. ANKZF1 acts downstream disassembly of stalled ribosomes and specifically cleaves off the terminal 3'-CCA nucleotides universal to all tRNAs from polypeptidyl-tRNAs, releasing (1) ubiquitinated polypeptides from 60S ribosomal subunit for degradation and (2) cleaved tRNAs. ANKZF1-cleaved tRNAs are then repaired and recycled by ELAC1 and TRNT1. Also plays a role in the cellular response to hydrogen peroxide and in the maintenance of mitochondrial integrity under conditions of cellular stress. The polypeptide is tRNA endonuclease ANKZF1 (Mus musculus (Mouse)).